Reading from the N-terminus, the 428-residue chain is Glutamate-1-semialdehyde 2,1-aminomutase 1 (428 aa).

N6-(pyridoxal phosphate)lysine is present on lysine 267.

Belongs to the class-III pyridoxal-phosphate-dependent aminotransferase family. HemL subfamily. Homodimer. Requires pyridoxal 5'-phosphate as cofactor.

Its subcellular location is the cytoplasm. The catalysed reaction is (S)-4-amino-5-oxopentanoate = 5-aminolevulinate. It participates in porphyrin-containing compound metabolism; protoporphyrin-IX biosynthesis; 5-aminolevulinate from L-glutamyl-tRNA(Glu): step 2/2. The protein is Glutamate-1-semialdehyde 2,1-aminomutase 1 of Staphylococcus aureus (strain bovine RF122 / ET3-1).